Here is a 268-residue protein sequence, read N- to C-terminus: Elongation factor Ts (268 aa).

The interval 81–84 (TDFV) is involved in Mg(2+) ion dislocation from EF-Tu.

Belongs to the EF-Ts family.

It is found in the cytoplasm. Its function is as follows. Associates with the EF-Tu.GDP complex and induces the exchange of GDP to GTP. It remains bound to the aminoacyl-tRNA.EF-Tu.GTP complex up to the GTP hydrolysis stage on the ribosome. This Buchnera aphidicola subsp. Acyrthosiphon pisum (strain 5A) protein is Elongation factor Ts.